We begin with the raw amino-acid sequence, 43 residues long: Protein PsbN (43 aa).

A helical transmembrane segment spans residues 5–27 (TLVAISISCLLVSFTGYALYTAF).

This sequence belongs to the PsbN family.

Its subcellular location is the plastid. It localises to the chloroplast thylakoid membrane. May play a role in photosystem I and II biogenesis. The chain is Protein PsbN from Cryptomeria japonica (Japanese cedar).